Consider the following 1666-residue polypeptide: Probable clathrin heavy chain (1666 aa).

WD40-like repeat stretches follow at residues 24–67 (SFGF…RPIS), 68–107 (ADSV…MNQD), 108–148 (VVYW…SSLN), 149–194 (GTQI…QPLE), 195–255 (SHAS…PEAV), 256–299 (NDFP…VSGE), and 300–328 (SIFV…VSIN). Phosphothreonine is present on Thr-392. At Ser-393 the chain carries Phosphoserine. CHCR repeat units lie at residues 534 to 680 (MFNS…QIVV), 683 to 825 (ATRY…DEEL), 830 to 969 (LMSV…LLDQ), 975 to 1120 (VPES…IPDA), 1124 to 1265 (YLKA…FRLA), 1270 to 1415 (LNLI…MLLT), and 1418 to 1561 (LAAL…YECF).

It belongs to the clathrin heavy chain family. In terms of assembly, clathrin triskelions, composed of 3 heavy chains and 3 light chains, are the basic subunits of the clathrin coat.

The protein localises to the cytoplasmic vesicle membrane. It is found in the membrane. It localises to the coated pit. Clathrin is the major protein of the polyhedral coat of coated pits and vesicles. This is Probable clathrin heavy chain (chc1) from Schizosaccharomyces pombe (strain 972 / ATCC 24843) (Fission yeast).